A 353-amino-acid chain; its full sequence is Quinolinate synthase (353 aa).

The iminosuccinate site is built by histidine 47 and serine 68. Cysteine 113 is a [4Fe-4S] cluster binding site. Residues 139–141 (YAN) and serine 156 contribute to the iminosuccinate site. Cysteine 200 serves as a coordination point for [4Fe-4S] cluster. Iminosuccinate-binding positions include 226 to 228 (HPE) and threonine 243. Residue cysteine 297 participates in [4Fe-4S] cluster binding.

This sequence belongs to the quinolinate synthase family. Type 1 subfamily. [4Fe-4S] cluster is required as a cofactor.

Its subcellular location is the cytoplasm. The catalysed reaction is iminosuccinate + dihydroxyacetone phosphate = quinolinate + phosphate + 2 H2O + H(+). Its pathway is cofactor biosynthesis; NAD(+) biosynthesis; quinolinate from iminoaspartate: step 1/1. Catalyzes the condensation of iminoaspartate with dihydroxyacetone phosphate to form quinolinate. In Vibrio campbellii (strain ATCC BAA-1116), this protein is Quinolinate synthase.